We begin with the raw amino-acid sequence, 316 residues long: Probable cobalamin biosynthesis protein CobD (316 aa).

5 helical membrane-spanning segments follow: residues 1–21 (MITE…DIVL), 50–70 (ISGM…GFAL), 89–109 (ILAL…KSLI), 165–185 (PLFY…ALAF), and 294–314 (ISLI…LLIL).

Belongs to the CobD/CbiB family.

The protein resides in the cell membrane. Its pathway is cofactor biosynthesis; adenosylcobalamin biosynthesis. In terms of biological role, converts cobyric acid to cobinamide by the addition of aminopropanol on the F carboxylic group. The chain is Probable cobalamin biosynthesis protein CobD from Methanothrix thermoacetophila (strain DSM 6194 / JCM 14653 / NBRC 101360 / PT) (Methanosaeta thermophila).